The sequence spans 178 residues: ATP-dependent protease subunit HslV (178 aa).

T5 is a catalytic residue. Residues G161, C164, and T167 each coordinate Na(+).

It belongs to the peptidase T1B family. HslV subfamily. As to quaternary structure, a double ring-shaped homohexamer of HslV is capped on each side by a ring-shaped HslU homohexamer. The assembly of the HslU/HslV complex is dependent on binding of ATP.

The protein resides in the cytoplasm. The enzyme catalyses ATP-dependent cleavage of peptide bonds with broad specificity.. Its activity is regulated as follows. Allosterically activated by HslU binding. In terms of biological role, protease subunit of a proteasome-like degradation complex believed to be a general protein degrading machinery. This is ATP-dependent protease subunit HslV from Nitratiruptor sp. (strain SB155-2).